A 340-amino-acid polypeptide reads, in one-letter code: MSSPSNFKKLQVVSLSKDFRSSTSVVEAHLPEEVPEGMVRVSVKYAGVNASDLNFTNGSYFKNVQPPFDCGFEAAGTVVQIGAGVANVKVGDHVVLMQYGCFAEFLDAPAERCIPVPELKPEYSVLPVSALTAAVALGEVGRVKKGDVALVTAAAGGTGQIAVQLLKHVYGCTVIGTCSSEEKAEFLKSIGCDHVINYKTESLDGRLHELCPKGVDVVYECVGGHTFNDAVRHVAVHARVVIIGSISSYKSGEVVPFSDPSGTSVTMLLLVKSASLNGFFLPQFHDVIPKYMANLLQYLKAGQVKLFVDKKVFHGLSSVADAVDHLYSGANYGKVLVEIQ.

The protein belongs to the zinc-containing alcohol dehydrogenase family. Quinone oxidoreductase subfamily.

It catalyses the reaction 2 a quinone + NADPH + H(+) = 2 a 1,4-benzosemiquinone + NADP(+). This Leishmania amazonensis protein is Probable quinone oxidoreductase.